We begin with the raw amino-acid sequence, 94 residues long: RING finger protein Z (94 aa).

Positions 1–19 are enriched in polar residues; sequence MGNCNGASKSNQPDSSRVT. Positions 1–20 are disordered; sequence MGNCNGASKSNQPDSSRVTQ. A lipid anchor (N-myristoyl glycine; by host) is attached at G2. The segment at 39–75 adopts an RING-type; atypical zinc-finger fold; sequence CKCCWFADTNLITCNDHYLCLRCHQVMLRNSDLCNIC. Residues 89-92 carry the PTAP/PSAP motif motif; the sequence is PTAP.

It belongs to the arenaviridae Z protein family. In terms of assembly, interacts with protein NP; this interaction probably directs the encapsidated genome to budding sites. Interacts (via RING domain) with polymerase L; this interaction inhibits viral transcription and replication, Z partially blocks the product exit tunnel for the releasing nascent RNA product. Interacts with the glycoprotein complex; this interaction plays a role in virion budding. Interacts with host eIF4E; this interaction results in eIF4E reduced affinity for its substrate, the 5'-m7 G cap structure. Interacts (via late-budding domain) with host TSG101; this interaction is essential for budding and release of viral particles. Interacts with host RPLP0; this interaction may serve to load ribosome-like particles inside the virion. Interacts with host PML; this interaction induces PML bodies redistribution in the cytoplasm upon viral infection. In terms of processing, myristoylation is required for the role of RING finger protein Z in assembly and budding.

The protein localises to the virion. It is found in the host cytoplasm. Its subcellular location is the host perinuclear region. It localises to the host cell membrane. Plays a crucial role in virion assembly and budding. Expressed late in the virus life cycle, it acts as an inhibitor of viral transcription and RNA synthesis by interacting with the viral polymerase L. Presumably recruits the NP encapsidated genome to cellular membranes at budding sites via direct interaction with NP. Plays critical roles in the final steps of viral release by interacting with host TSG101, a member of the vacuolar protein-sorting pathway and using other cellular host proteins involved in vesicle formation pathway. The budding of the virus progeny occurs after association of protein Z with the viral glycoprotein complex SSP-GP1-GP2 at the cell periphery, step that requires myristoylation of protein Z. Also selectively represses protein production by associating with host eIF4E. In cell-based minigenome assay, has an inhibitory effect on the ribonucleoprotein machinery (vRNP), which is responsible for the replication and transcription of the viral genome. The sequence is that of RING finger protein Z from Akodon azarae (Azara's grass mouse).